Here is a 149-residue protein sequence, read N- to C-terminus: Sec-independent protein translocase protein TatB (149 aa).

Residues Met-1–Gly-21 form a helical membrane-spanning segment. The tract at residues Val-92–Ala-149 is disordered. Polar residues predominate over residues Asn-101 to Gln-111.

Belongs to the TatB family. In terms of assembly, the Tat system comprises two distinct complexes: a TatABC complex, containing multiple copies of TatA, TatB and TatC subunits, and a separate TatA complex, containing only TatA subunits. Substrates initially bind to the TatABC complex, which probably triggers association of the separate TatA complex to form the active translocon.

The protein resides in the cell inner membrane. In terms of biological role, part of the twin-arginine translocation (Tat) system that transports large folded proteins containing a characteristic twin-arginine motif in their signal peptide across membranes. Together with TatC, TatB is part of a receptor directly interacting with Tat signal peptides. TatB may form an oligomeric binding site that transiently accommodates folded Tat precursor proteins before their translocation. The protein is Sec-independent protein translocase protein TatB of Thiobacillus denitrificans (strain ATCC 25259 / T1).